Consider the following 382-residue polypeptide: L-lysine 4-hydroxylase (382 aa).

Residues His182, Glu184, and His318 each contribute to the Fe cation site.

The protein belongs to the clavaminate synthase family. It depends on Fe(2+) as a cofactor.

It carries out the reaction L-lysine + 2-oxoglutarate + O2 = (4R)-4-hydroxy-L-lysine + succinate + CO2. In terms of biological role, alpha-ketoglutarate-dependent dioxygenase that in vitro catalyzes the regio- and stereoselective hydroxylation of L-lysine, leading to (4R)-4-hydroxy-L-lysine. Cannot use D-lysine or L-ornithine as substrate. This Chitinophaga pinensis (strain ATCC 43595 / DSM 2588 / LMG 13176 / NBRC 15968 / NCIMB 11800 / UQM 2034) protein is L-lysine 4-hydroxylase.